We begin with the raw amino-acid sequence, 477 residues long: Argininosuccinate lyase (477 aa).

This sequence belongs to the lyase 1 family. Argininosuccinate lyase subfamily.

The protein localises to the cytoplasm. The catalysed reaction is 2-(N(omega)-L-arginino)succinate = fumarate + L-arginine. The protein operates within amino-acid biosynthesis; L-arginine biosynthesis; L-arginine from L-ornithine and carbamoyl phosphate: step 3/3. This chain is Argininosuccinate lyase, found in Corynebacterium diphtheriae (strain ATCC 700971 / NCTC 13129 / Biotype gravis).